The chain runs to 94 residues: Dynein light chain, cytoplasmic (94 aa).

It belongs to the dynein light chain family. Homodimer. Cytoplasmic dynein consists of two catalytic heavy chains (HCs) and a number of non-catalytic subunits which present intermediate chains (ICs), light intermediate chains (LICs) and light chains (LCs). Component of the nuclear pore complex (NPC). The nuclear pore complex constitutes the exclusive means of nucleocytoplasmic transport. NPCs allow the passive diffusion of ions and small molecules and the active, nuclear transport receptor-mediated bidirectional transport of macromolecules such as proteins, RNAs, ribonucleoparticles (RNPs), and ribosomal subunits across the nuclear envelope. Due to its 8-fold rotational symmetry, all subunits are present with 8 copies or multiples thereof.

It is found in the cytoplasm. It localises to the cytoskeleton. Its subcellular location is the nucleus. The protein resides in the nuclear pore complex. Acts as one of several non-catalytic accessory components of the cytoplasmic dynein complex that are thought to be involved in linking dynein to cargos and to adapter proteins that regulate dynein function. Cytoplasmic dynein 1 acts as a motor for the intracellular retrograde motility of vesicles and organelles along microtubules. May play a role in changing or maintaining the spatial distribution of cytoskeletal structures. Also a component of the nuclear pore complex. The polypeptide is Dynein light chain, cytoplasmic (nudG) (Emericella nidulans (strain FGSC A4 / ATCC 38163 / CBS 112.46 / NRRL 194 / M139) (Aspergillus nidulans)).